We begin with the raw amino-acid sequence, 1213 residues long: DNA-directed RNA polymerase subunit beta' (1213 aa).

Positions 60, 62, 75, and 78 each coordinate Zn(2+). 3 residues coordinate Mg(2+): Asp450, Asp452, and Asp454. Positions 819, 893, 900, and 903 each coordinate Zn(2+).

It belongs to the RNA polymerase beta' chain family. The RNAP catalytic core consists of 2 alpha, 1 beta, 1 beta' and 1 omega subunit. When a sigma factor is associated with the core the holoenzyme is formed, which can initiate transcription. It depends on Mg(2+) as a cofactor. Zn(2+) serves as cofactor.

The enzyme catalyses RNA(n) + a ribonucleoside 5'-triphosphate = RNA(n+1) + diphosphate. In terms of biological role, DNA-dependent RNA polymerase catalyzes the transcription of DNA into RNA using the four ribonucleoside triphosphates as substrates. The sequence is that of DNA-directed RNA polymerase subunit beta' from Streptococcus pyogenes serotype M4 (strain MGAS10750).